The chain runs to 249 residues: DNA polymerase sliding clamp 3 (249 aa).

This sequence belongs to the PCNA family. Homotrimer. The subunits circularize to form a toroid; DNA passes through its center. Replication factor C (RFC) is required to load the toroid on the DNA.

Functionally, sliding clamp subunit that acts as a moving platform for DNA processing. Responsible for tethering the catalytic subunit of DNA polymerase and other proteins to DNA during high-speed replication. This is DNA polymerase sliding clamp 3 from Aeropyrum pernix (strain ATCC 700893 / DSM 11879 / JCM 9820 / NBRC 100138 / K1).